Consider the following 292-residue polypeptide: Polyamine aminopropyltransferase 1 (292 aa).

Positions 1–244 (MELGMFRLNI…YVNSFVFASD (244 aa)) constitute a PABS domain. Residue Gln-35 coordinates S-methyl-5'-thioadenosine. Residues His-66 and Glu-90 each coordinate spermidine. S-methyl-5'-thioadenosine contacts are provided by residues Asp-110 and 142-143 (DG). Asp-163 acts as the Proton acceptor in catalysis.

The protein belongs to the spermidine/spermine synthase family. As to quaternary structure, homodimer or homotetramer.

The protein localises to the cytoplasm. It carries out the reaction norspermine + S-adenosyl 3-(methylsulfanyl)propylamine = caldopentamine + S-methyl-5'-thioadenosine + 2 H(+). It catalyses the reaction norspermidine + S-adenosyl 3-(methylsulfanyl)propylamine = norspermine + S-methyl-5'-thioadenosine + H(+). The enzyme catalyses S-adenosyl 3-(methylsulfanyl)propylamine + spermidine = thermospermine + S-methyl-5'-thioadenosine + H(+). In terms of biological role, involved in the biosynthesis of polyamines which are thought to support the growth of thermophilic microorganisms under high-temperature conditions. It seems that long-chain and branched-chain of polyamines effectively stabilize DNA and RNA, respectively. Catalyzes the irreversible transfer of a propylamine group from the amino donor S-adenosylmethioninamine (decarboxy-AdoMet) to norspermidine, spermidine and norspermine to yield norspermine, thermospermine and caldopentamine, respectively. It can also synthesize sym-norspermidine (bis(3-aminopropyl)amine) from 1,3-diaminopropane with a very low activity. The biosynthesis of caldohexamine and caldoheptamine from caldopentamine has been also observed. This is Polyamine aminopropyltransferase 1 from Hyperthermus butylicus (strain DSM 5456 / JCM 9403 / PLM1-5).